A 110-amino-acid polypeptide reads, in one-letter code: Large ribosomal subunit protein uL22 (110 aa).

Positions 84–95 (ARGTASKIRKPT) are enriched in basic residues. Positions 84–110 (ARGTASKIRKPTSHVMVEVSKPEKKEA) are disordered.

It belongs to the universal ribosomal protein uL22 family. As to quaternary structure, part of the 50S ribosomal subunit.

Functionally, this protein binds specifically to 23S rRNA; its binding is stimulated by other ribosomal proteins, e.g. L4, L17, and L20. It is important during the early stages of 50S assembly. It makes multiple contacts with different domains of the 23S rRNA in the assembled 50S subunit and ribosome. In terms of biological role, the globular domain of the protein is located near the polypeptide exit tunnel on the outside of the subunit, while an extended beta-hairpin is found that lines the wall of the exit tunnel in the center of the 70S ribosome. The chain is Large ribosomal subunit protein uL22 from Campylobacter concisus (strain 13826).